A 250-amino-acid polypeptide reads, in one-letter code: DNA repair protein RecO (250 aa).

Belongs to the RecO family.

In terms of biological role, involved in DNA repair and RecF pathway recombination. The sequence is that of DNA repair protein RecO from Lactobacillus acidophilus (strain ATCC 700396 / NCK56 / N2 / NCFM).